We begin with the raw amino-acid sequence, 122 residues long: Acidic phospholipase A2 A' (122 aa).

Disulfide bonds link C26–C115, C28–C44, C43–C95, C49–C122, C50–C88, C57–C81, and C75–C86. Ca(2+) is bound by residues Y27, G29, and G31. Residue H47 is part of the active site. D48 is a binding site for Ca(2+). The active site involves D89.

Belongs to the phospholipase A2 family. Group II subfamily. D49 sub-subfamily. The cofactor is Ca(2+). In terms of tissue distribution, expressed by the venom gland.

It localises to the secreted. It catalyses the reaction a 1,2-diacyl-sn-glycero-3-phosphocholine + H2O = a 1-acyl-sn-glycero-3-phosphocholine + a fatty acid + H(+). PLA2 catalyzes the calcium-dependent hydrolysis of the 2-acyl groups in 3-sn-phosphoglycerides. The chain is Acidic phospholipase A2 A' from Gloydius halys (Chinese water mocassin).